The following is a 364-amino-acid chain: UDP-3-O-acylglucosamine N-acyltransferase (364 aa).

Histidine 258 (proton acceptor) is an active-site residue.

It belongs to the transferase hexapeptide repeat family. LpxD subfamily. Homotrimer.

It catalyses the reaction a UDP-3-O-[(3R)-3-hydroxyacyl]-alpha-D-glucosamine + a (3R)-hydroxyacyl-[ACP] = a UDP-2-N,3-O-bis[(3R)-3-hydroxyacyl]-alpha-D-glucosamine + holo-[ACP] + H(+). It participates in bacterial outer membrane biogenesis; LPS lipid A biosynthesis. In terms of biological role, catalyzes the N-acylation of UDP-3-O-acylglucosamine using 3-hydroxyacyl-ACP as the acyl donor. Is involved in the biosynthesis of lipid A, a phosphorylated glycolipid that anchors the lipopolysaccharide to the outer membrane of the cell. The chain is UDP-3-O-acylglucosamine N-acyltransferase from Burkholderia orbicola (strain AU 1054).